The sequence spans 141 residues: ATP synthase epsilon chain (141 aa).

Belongs to the ATPase epsilon chain family. In terms of assembly, F-type ATPases have 2 components, CF(1) - the catalytic core - and CF(0) - the membrane proton channel. CF(1) has five subunits: alpha(3), beta(3), gamma(1), delta(1), epsilon(1). CF(0) has three main subunits: a, b and c.

It localises to the cell inner membrane. Functionally, produces ATP from ADP in the presence of a proton gradient across the membrane. The chain is ATP synthase epsilon chain from Teredinibacter turnerae (strain ATCC 39867 / T7901).